We begin with the raw amino-acid sequence, 293 residues long: Small ribosomal subunit biogenesis GTPase RsgA (293 aa).

One can recognise a CP-type G domain in the interval 63–223; it reads KNELVRPPIA…VADTPGFSSL (161 aa). GTP contacts are provided by residues 112–115 and 166–174; these read SKMD and GQSGVGKSS. 4 residues coordinate Zn(2+): C247, C252, H254, and C260.

This sequence belongs to the TRAFAC class YlqF/YawG GTPase family. RsgA subfamily. As to quaternary structure, monomer. Associates with 30S ribosomal subunit, binds 16S rRNA. Zn(2+) is required as a cofactor.

It is found in the cytoplasm. Its function is as follows. One of several proteins that assist in the late maturation steps of the functional core of the 30S ribosomal subunit. Helps release RbfA from mature subunits. May play a role in the assembly of ribosomal proteins into the subunit. Circularly permuted GTPase that catalyzes slow GTP hydrolysis, GTPase activity is stimulated by the 30S ribosomal subunit. This Bacillus cereus (strain ATCC 10987 / NRS 248) protein is Small ribosomal subunit biogenesis GTPase RsgA.